The chain runs to 327 residues: Malate dehydrogenase (327 aa).

12–18 (GAAGQIA) serves as a coordination point for NAD(+). Substrate-binding residues include arginine 93 and arginine 99. Residues asparagine 106, glutamine 113, and 130–132 (VGN) contribute to the NAD(+) site. Positions 132 and 163 each coordinate substrate. Histidine 188 (proton acceptor) is an active-site residue.

This sequence belongs to the LDH/MDH superfamily. MDH type 2 family.

It catalyses the reaction (S)-malate + NAD(+) = oxaloacetate + NADH + H(+). In terms of biological role, catalyzes the reversible oxidation of malate to oxaloacetate. This chain is Malate dehydrogenase, found in Burkholderia mallei (strain NCTC 10247).